Reading from the N-terminus, the 207-residue chain is ATP-dependent Clp protease proteolytic subunit (207 aa).

Ser111 (nucleophile) is an active-site residue. Residue His136 is part of the active site.

Belongs to the peptidase S14 family. In terms of assembly, fourteen ClpP subunits assemble into 2 heptameric rings which stack back to back to give a disk-like structure with a central cavity, resembling the structure of eukaryotic proteasomes.

The protein resides in the cytoplasm. It carries out the reaction Hydrolysis of proteins to small peptides in the presence of ATP and magnesium. alpha-casein is the usual test substrate. In the absence of ATP, only oligopeptides shorter than five residues are hydrolyzed (such as succinyl-Leu-Tyr-|-NHMec, and Leu-Tyr-Leu-|-Tyr-Trp, in which cleavage of the -Tyr-|-Leu- and -Tyr-|-Trp bonds also occurs).. Functionally, cleaves peptides in various proteins in a process that requires ATP hydrolysis. Has a chymotrypsin-like activity. Plays a major role in the degradation of misfolded proteins. The sequence is that of ATP-dependent Clp protease proteolytic subunit from Pectobacterium atrosepticum (strain SCRI 1043 / ATCC BAA-672) (Erwinia carotovora subsp. atroseptica).